Here is a 189-residue protein sequence, read N- to C-terminus: Prostaglandin-H2 D-isomerase (189 aa).

The first 24 residues, methionine 1–alanine 24, serve as a signal peptide directing secretion. At glutamine 25 the chain carries Pyrrolidone carboxylic acid. Asparagine 49 carries an N-linked (GlcNAc...) asparagine glycan. Catalysis depends on cysteine 63, which acts as the Nucleophile. Asparagine 76 is a glycosylation site (N-linked (GlcNAc...) asparagine). Cysteines 87 and 184 form a disulfide.

This sequence belongs to the calycin superfamily. Lipocalin family. Monomer. As to expression, abundant in the brain and CNS, where it is expressed in tissues of the blood-brain barrier and secreted into the cerebro-spinal fluid.

Its subcellular location is the rough endoplasmic reticulum. The protein localises to the nucleus membrane. It is found in the golgi apparatus. The protein resides in the cytoplasm. It localises to the perinuclear region. Its subcellular location is the secreted. The enzyme catalyses prostaglandin H2 = prostaglandin D2. Its function is as follows. Catalyzes the conversion of PGH2 to PGD2, a prostaglandin involved in smooth muscle contraction/relaxation and a potent inhibitor of platelet aggregation. Involved in a variety of CNS functions, such as sedation, NREM sleep and PGE2-induced allodynia, and may have an anti-apoptotic role in oligodendrocytes. Binds small non-substrate lipophilic molecules, including biliverdin, bilirubin, retinal, retinoic acid and thyroid hormone, and may act as a scavenger for harmful hydrophobic molecules and as a secretory retinoid and thyroid hormone transporter. Possibly involved in development and maintenance of the blood-brain, blood-retina, blood-aqueous humor and blood-testis barrier. It is likely to play important roles in both maturation and maintenance of the central nervous system and male reproductive system. Involved in PLA2G3-dependent maturation of mast cells. PLA2G3 is secreted by immature mast cells and acts on nearby fibroblasts upstream to PTDGS to synthesize PGD2, which in turn promotes mast cell maturation and degranulation via PTGDR. The chain is Prostaglandin-H2 D-isomerase (PTGDS) from Sus scrofa (Pig).